Here is a 189-residue protein sequence, read N- to C-terminus: Interferon alpha-16 (189 aa).

An N-terminal signal peptide occupies residues 1–23 (MALSFSLLMAVLVLSYKSICSLG). 2 cysteine pairs are disulfide-bonded: C24-C122 and C52-C162.

This sequence belongs to the alpha/beta interferon family.

The protein localises to the secreted. Produced by macrophages, IFN-alpha have antiviral activities. Interferon stimulates the production of two enzymes: a protein kinase and an oligoadenylate synthetase. The sequence is that of Interferon alpha-16 (IFNA16) from Homo sapiens (Human).